A 106-amino-acid chain; its full sequence is Toxin-like structure LSTX-D5 (106 aa).

An N-terminal signal peptide occupies residues 1–20; sequence MMKVLVVVALLVTLISYSSS. The propeptide occupies 21-41; the sequence is EGIDDLETDELLSLMANEQTR. Intrachain disulfides connect cysteine 45/cysteine 60, cysteine 52/cysteine 69, cysteine 59/cysteine 85, and cysteine 71/cysteine 83.

The protein belongs to the neurotoxin 19 (CSTX) family. 02 (D7) subfamily. In terms of tissue distribution, expressed by the venom gland.

It localises to the secreted. This chain is Toxin-like structure LSTX-D5, found in Lycosa singoriensis (Wolf spider).